Here is a 336-residue protein sequence, read N- to C-terminus: Probable tRNA N6-adenosine threonylcarbamoyltransferase (336 aa).

Residues His-110, His-114, and Tyr-131 each coordinate a divalent metal cation. Substrate contacts are provided by residues 131–135 (YVSGG), Asp-163, Gly-178, Glu-182, and Asn-267. Asp-295 serves as a coordination point for a divalent metal cation.

This sequence belongs to the KAE1 / TsaD family. Component of the EKC/KEOPS complex; the whole complex dimerizes. It depends on a divalent metal cation as a cofactor.

The protein resides in the cytoplasm. The protein localises to the nucleus. It catalyses the reaction L-threonylcarbamoyladenylate + adenosine(37) in tRNA = N(6)-L-threonylcarbamoyladenosine(37) in tRNA + AMP + H(+). Component of the EKC/KEOPS complex that is required for the formation of a threonylcarbamoyl group on adenosine at position 37 (t(6)A37) in tRNAs that read codons beginning with adenine. The complex is probably involved in the transfer of the threonylcarbamoyl moiety of threonylcarbamoyl-AMP (TC-AMP) to the N6 group of A37. Osgep likely plays a direct catalytic role in this reaction, but requires other protein(s) of the complex to fulfill this activity. The polypeptide is Probable tRNA N6-adenosine threonylcarbamoyltransferase (Dictyostelium discoideum (Social amoeba)).